The sequence spans 232 residues: Large ribosomal subunit protein uL1 (232 aa).

It belongs to the universal ribosomal protein uL1 family. Part of the 50S ribosomal subunit.

Functionally, binds directly to 23S rRNA. The L1 stalk is quite mobile in the ribosome, and is involved in E site tRNA release. In terms of biological role, protein L1 is also a translational repressor protein, it controls the translation of the L11 operon by binding to its mRNA. The chain is Large ribosomal subunit protein uL1 from Levilactobacillus brevis (strain ATCC 367 / BCRC 12310 / CIP 105137 / JCM 1170 / LMG 11437 / NCIMB 947 / NCTC 947) (Lactobacillus brevis).